Consider the following 344-residue polypeptide: MPQSATKPFIDVLSGQRQAIPPMWMMRQAGRYLPEYREVRAKAGGFLDLCFNPELAAEVTLQPIRRFGFDAAIIFSDILVIPYALGRSVRFEVGEGPRLEPLDDPAKVATLAPRADFGKLAPVFDALKIVRGALDPKTALIGFCGAPWTVATYMVAGHGTPDQAPARMMAYRHPDAFAKIIDVLVDNSIEYLLAQLAAGANALQIFDTWAGVLPPAEFARWSVEPTRRIVEGVRAKVPDAKIIGFPRGAGAQLPGYVEATGVNGVSIDWTAEPAFIRERVQSRVAVQGNLDPLVLITGGAALDRAVDNVLANFAQGRFIFNLGHGIQPETPIAHVEQMLKRVRG.

Residues 27-31, Phe46, Asp77, Tyr153, Thr208, and His324 each bind substrate; that span reads RQAGR.

The protein belongs to the uroporphyrinogen decarboxylase family. Homodimer.

The protein localises to the cytoplasm. It carries out the reaction uroporphyrinogen III + 4 H(+) = coproporphyrinogen III + 4 CO2. It participates in porphyrin-containing compound metabolism; protoporphyrin-IX biosynthesis; coproporphyrinogen-III from 5-aminolevulinate: step 4/4. Functionally, catalyzes the decarboxylation of four acetate groups of uroporphyrinogen-III to yield coproporphyrinogen-III. The polypeptide is Uroporphyrinogen decarboxylase (Bradyrhizobium diazoefficiens (strain JCM 10833 / BCRC 13528 / IAM 13628 / NBRC 14792 / USDA 110)).